The following is a 123-amino-acid chain: Small ribosomal subunit protein uS12cz/uS12cy (123 aa).

This sequence belongs to the universal ribosomal protein uS12 family. In terms of assembly, part of the 30S ribosomal subunit.

It localises to the plastid. The protein localises to the chloroplast. Functionally, with S4 and S5 plays an important role in translational accuracy. Located at the interface of the 30S and 50S subunits. This Cucumis sativus (Cucumber) protein is Small ribosomal subunit protein uS12cz/uS12cy (rps12-A).